A 319-amino-acid polypeptide reads, in one-letter code: ATP-dependent 6-phosphofructokinase (319 aa).

G11 contacts ATP. ADP is bound at residue 21–25 (RAVVR). ATP contacts are provided by residues 72-73 (RC) and 102-105 (GDGS). Residue D103 participates in Mg(2+) binding. 125–127 (TID) lines the substrate pocket. The active-site Proton acceptor is the D127. R154 is a binding site for ADP. Substrate is bound by residues R162 and 169–171 (MGR). ADP is bound by residues 185 to 187 (GAE), R211, and 213 to 215 (KKH). Residues E222, R243, and 249 to 252 (HIQR) each bind substrate.

The protein belongs to the phosphofructokinase type A (PFKA) family. ATP-dependent PFK group I subfamily. Prokaryotic clade 'B1' sub-subfamily. In terms of assembly, homotetramer. It depends on Mg(2+) as a cofactor.

It is found in the cytoplasm. The enzyme catalyses beta-D-fructose 6-phosphate + ATP = beta-D-fructose 1,6-bisphosphate + ADP + H(+). It participates in carbohydrate degradation; glycolysis; D-glyceraldehyde 3-phosphate and glycerone phosphate from D-glucose: step 3/4. Its activity is regulated as follows. Allosterically activated by ADP and other diphosphonucleosides, and allosterically inhibited by phosphoenolpyruvate. Its function is as follows. Catalyzes the phosphorylation of D-fructose 6-phosphate to fructose 1,6-bisphosphate by ATP, the first committing step of glycolysis. The chain is ATP-dependent 6-phosphofructokinase from Bacillus licheniformis (strain ATCC 14580 / DSM 13 / JCM 2505 / CCUG 7422 / NBRC 12200 / NCIMB 9375 / NCTC 10341 / NRRL NRS-1264 / Gibson 46).